The following is a 365-amino-acid chain: Alanine racemase (365 aa).

K32 functions as the Proton acceptor; specific for D-alanine in the catalytic mechanism. K32 is modified (N6-(pyridoxal phosphate)lysine). R128 is a substrate binding site. The active-site Proton acceptor; specific for L-alanine is the Y257. M305 provides a ligand contact to substrate.

It belongs to the alanine racemase family. Requires pyridoxal 5'-phosphate as cofactor.

The enzyme catalyses L-alanine = D-alanine. It functions in the pathway amino-acid biosynthesis; D-alanine biosynthesis; D-alanine from L-alanine: step 1/1. Catalyzes the interconversion of L-alanine and D-alanine. May also act on other amino acids. The sequence is that of Alanine racemase (alr) from Francisella tularensis subsp. mediasiatica (strain FSC147).